A 209-amino-acid polypeptide reads, in one-letter code: MEQQETVKKDDASSARPAKAIVEALLFAAGDEGLSLAQIAAVLDVDESEAKAVIAALQEDYSREERGIQLMELAGVFLLATKKEHASYLKKLVEAPGASSLSQAALETLAIIAYRQPITRAEIEEIRGVKSDKPLQTLMARALIKEVGRAEGTGRPILYGTTAEFLDYFGLKTLEELPPLPEWADDGELEREADLFFEKLAENLSDEKP.

Belongs to the ScpB family. As to quaternary structure, homodimer. Homodimerization may be required to stabilize the binding of ScpA to the Smc head domains. Component of a cohesin-like complex composed of ScpA, ScpB and the Smc homodimer, in which ScpA and ScpB bind to the head domain of Smc. The presence of the three proteins is required for the association of the complex with DNA.

It is found in the cytoplasm. Functionally, participates in chromosomal partition during cell division. May act via the formation of a condensin-like complex containing Smc and ScpA that pull DNA away from mid-cell into both cell halves. In Geobacillus thermodenitrificans (strain NG80-2), this protein is Segregation and condensation protein B.